Consider the following 638-residue polypeptide: uncharacterized protein (638 aa).

An N-terminal signal peptide occupies residues 1 to 31 (MKFIKFNDSTIDSFLFMMLTDLAKTLTKSEA). Basic and acidic residues-rich tracts occupy residues 247-256 (EEKKAPKLSD), 273-284 (EEMPTWHRETEA), 301-310 (DLGKDASREG), and 329-342 (RKDY…ESQK). Disordered regions lie at residues 247–285 (EEKK…TEAP) and 301–354 (DLGK…ADGK). Positions 445-632 (FTLLVDCSAS…DVLYPLLKKL (188 aa)) constitute a VWFA domain.

This is an uncharacterized protein from Bacillus subtilis (strain 168).